A 146-amino-acid chain; its full sequence is MISSCVTRCFGRGKCLPGPATASIYQTIRCISTNSNKAAEAPIFPKLEDVKMHELIGNNNFGKKTYYVERSRTGNLPVYSAYKNGGNKIITEIRKIEGDVIQLRNDLQEQLPFIPKKSWSVVMQSKKIIIKGNAVEAVKRVLTKKF.

A mitochondrion-targeting transit peptide spans 1–38; the sequence is MISSCVTRCFGRGKCLPGPATASIYQTIRCISTNSNKA.

Belongs to the mitochondrion-specific ribosomal protein mL49 family. In terms of assembly, component of the mitochondrial large ribosomal subunit (mt-LSU). Mature yeast 74S mitochondrial ribosomes consist of a small (37S) and a large (54S) subunit. The 37S small subunit contains a 15S ribosomal RNA (15S mt-rRNA) and 34 different proteins. The 54S large subunit contains a 21S rRNA (21S mt-rRNA) and 46 different proteins.

The protein resides in the mitochondrion. Its function is as follows. Component of the mitochondrial ribosome (mitoribosome), a dedicated translation machinery responsible for the synthesis of mitochondrial genome-encoded proteins, including at least some of the essential transmembrane subunits of the mitochondrial respiratory chain. The mitoribosomes are attached to the mitochondrial inner membrane and translation products are cotranslationally integrated into the membrane. This Saccharomyces cerevisiae (strain ATCC 204508 / S288c) (Baker's yeast) protein is Large ribosomal subunit protein mL49 (IMG2).